The sequence spans 785 residues: MGSDWDEIKRLAADFQKAQLTSTLQKLSERNCVEIVTLLLEKQLLEVVFTNDGKEYITPDHLEREIQDELYANGGRANLVEVSRTLNVDLSRIVALAERIAAENPLVHLVLGQLIDEDYISHIAQEINEKLALRGEISISDLASQFDLPSEFLQQDVVEKHLGKIIKGRQDATNPRVFFTQAYIQRCKAKIRGALAAITRPTNVAVILQQINVQEKIFHSLLDEISPAGQVTSKLANAQYVPHIYAKTQADWVNSFYKQNSFLEYDAINKLGISDAKSYIRKQFPNEEFLFLKRVALGARLVELTVVTALNECSATKQYLDLTTILPSNLSEEDIEEVFSAIMAQKHSNPSNFVYLDSIVFSQPYLTELVQPCHALAEAQAKAAIDSGVYQQFIVEKTLAQKGNASFQDQDDDGKLDKRDERRKKASSGKAGGGAQGRETKTKSTKKHQRRSAAAQNDSDVEDDVQHQGSRGAGGGGGNKKTVKPLDLVKTADIEKLINASLQEEGLEHLAPSIAALYLNQLNQAALAKAQELYEATPQTNRRQTHAAIQDRINTLLIDIRLYEKGLKLFSHDTQTQLVKYLLKSLGNDICNELSLYVASECNLTVKNTSLNVDQRIKLAQECDAEYRSALLEQNKALNKSIDDFELATESVLKACSMIIKKVDKKKDRLLIADHKNKLQQQLLDCQEPALLLHLAALILFTTISGCILHASGKFVSAILQHIRGSLSDPQNDMLLRYHDLVLQVLQTAPESDDSKMAHEQLQIMQSKVVELAQNYTRASVSKAD.

Residues 404-482 (NASFQDQDDD…AGGGGGNKKT (79 aa)) are disordered.

It belongs to the UFL1 family.

E3 UFM1-protein ligase that mediates ufmylation of target proteins. The protein is E3 UFM1-protein ligase 1 homolog of Drosophila persimilis (Fruit fly).